The chain runs to 118 residues: Mitochondrial import inner membrane translocase subunit Tim10 B (118 aa).

Residues 31–55 carry the Twin CX3C motif motif; it reads CFQRCVPSLHHRALDAEEEACLHSC. 2 disulfides stabilise this stretch: C31–C55 and C35–C51. The disordered stretch occupies residues 89–118; sequence SAVPHATAEQLETSPSRSLPSGNLGKGGAG. Over residues 98-109 the composition is skewed to polar residues; that stretch reads QLETSPSRSLPS.

The protein belongs to the small Tim family. In terms of assembly, component of the TIM22 complex, which core is composed of TIMM22, associated with TIMM10 (TIMM10A and/or TIMM10B), TIMM9, AGK and TIMM29.

The protein resides in the mitochondrion inner membrane. Its function is as follows. Component of the TIM22 complex, a complex that mediates the import and insertion of multi-pass transmembrane proteins into the mitochondrial inner membrane. The TIM22 complex forms a twin-pore translocase that uses the membrane potential as the external driving force. In the TIM22 complex, it may act as a docking point for the soluble 70 kDa complex that guides the target proteins in transit through the aqueous mitochondrial intermembrane space. The chain is Mitochondrial import inner membrane translocase subunit Tim10 B (TIMM10B) from Bos taurus (Bovine).